The primary structure comprises 28 residues: Caerulein precursor fragment B1 (28 aa).

This sequence belongs to the gastrin/cholecystokinin family. As to expression, expressed by the skin glands.

The protein localises to the secreted. Its function is as follows. Peptide CPF-B1: Has antimicrobial activity against Gram-negative bacteria E.coli ATCC 25922 (MIC=5 uM) and multidrug-resistant A.baumannii (MIC=4-8 uM), against Gram-positive bacteria S.aureus ATCC 25923 (MIC=5 uM) and methicillin-resistant S.aureus and against fungus C.albicans ATCC 90028 (MIC=25 uM). Has some hemolytic activity against human erythrocytes at high concentrations. This is Caerulein precursor fragment B1 from Xenopus borealis (Kenyan clawed frog).